The following is a 693-amino-acid chain: Elongation factor G (693 aa).

One can recognise a tr-type G domain in the interval 8–282; sequence EKTRNIGIMA…AVIDYLPSPL (275 aa). GTP is bound by residues 17–24, 81–85, and 135–138; these read AHVDAGKT, DTPGH, and NKMD.

It belongs to the TRAFAC class translation factor GTPase superfamily. Classic translation factor GTPase family. EF-G/EF-2 subfamily.

It localises to the cytoplasm. Functionally, catalyzes the GTP-dependent ribosomal translocation step during translation elongation. During this step, the ribosome changes from the pre-translocational (PRE) to the post-translocational (POST) state as the newly formed A-site-bound peptidyl-tRNA and P-site-bound deacylated tRNA move to the P and E sites, respectively. Catalyzes the coordinated movement of the two tRNA molecules, the mRNA and conformational changes in the ribosome. In Streptococcus pneumoniae (strain ATCC 700669 / Spain 23F-1), this protein is Elongation factor G.